The sequence spans 337 residues: Protein EXORDIUM-like 3 (337 aa).

Positions 1–25 (MHSLPVNLVLTVLTVFLTSPAQVIG) are cleaved as a signal peptide. 3 N-linked (GlcNAc...) asparagine glycosylation sites follow: Asn-34, Asn-66, and Asn-119.

Belongs to the EXORDIUM family.

The protein localises to the secreted. It is found in the extracellular space. The protein resides in the apoplast. In terms of biological role, may play a role in a brassinosteroid-dependent regulation of growth and development. This Arabidopsis thaliana (Mouse-ear cress) protein is Protein EXORDIUM-like 3 (EXL3).